We begin with the raw amino-acid sequence, 623 residues long: Putative chaperone protein ClpB2, chloroplastic (623 aa).

The 123-residue stretch at 1 to 123 folds into the Clp R domain; sequence MNDLKFDPNV…KSEVEKLRGE (123 aa). 2 repeat regions span residues 6–71 and 77–123; these read FDPN…NQSL and RNLG…LRGE. The tract at residues 129 to 375 is i; the sequence is LKTYGTDLVE…HVKAQLDIQP (247 aa). 172–179 is a binding site for ATP; the sequence is GEPGVGKT. The stretch at 368–462 forms a coiled coil; it reads KAQLDIQPEE…LQEAERQHDV (95 aa). An ATP-binding site is contributed by 571–578; sequence GPTGVGKT.

This sequence belongs to the ClpA/ClpB family.

This chain is Putative chaperone protein ClpB2, chloroplastic (CLPB2), found in Arabidopsis thaliana (Mouse-ear cress).